Consider the following 118-residue polypeptide: Large ribosomal subunit protein bL20 (118 aa).

The protein belongs to the bacterial ribosomal protein bL20 family.

Binds directly to 23S ribosomal RNA and is necessary for the in vitro assembly process of the 50S ribosomal subunit. It is not involved in the protein synthesizing functions of that subunit. The protein is Large ribosomal subunit protein bL20 of Pseudomonas entomophila (strain L48).